Here is a 63-residue protein sequence, read N- to C-terminus: Large ribosomal subunit protein bL32 (63 aa).

Disordered regions lie at residues 1–25 (MAVP…LTTP) and 42–63 (VSPK…QNND). Basic residues predominate over residues 7 to 20 (KTSKQKKRSRRGHI). Positions 54–63 (ANENKQQNND) are enriched in polar residues.

Belongs to the bacterial ribosomal protein bL32 family.

In Lactobacillus johnsonii (strain CNCM I-12250 / La1 / NCC 533), this protein is Large ribosomal subunit protein bL32.